We begin with the raw amino-acid sequence, 240 residues long: Methylthioribulose-1-phosphate dehydratase (240 aa).

Cysteine 99 contacts substrate. Histidine 116 and histidine 118 together coordinate Zn(2+). The Proton donor/acceptor role is filled by glutamate 145. Position 201 (histidine 201) interacts with Zn(2+).

This sequence belongs to the aldolase class II family. MtnB subfamily. Zn(2+) serves as cofactor.

The protein resides in the cytoplasm. The enzyme catalyses 5-(methylsulfanyl)-D-ribulose 1-phosphate = 5-methylsulfanyl-2,3-dioxopentyl phosphate + H2O. The protein operates within amino-acid biosynthesis; L-methionine biosynthesis via salvage pathway; L-methionine from S-methyl-5-thio-alpha-D-ribose 1-phosphate: step 2/6. In terms of biological role, catalyzes the dehydration of methylthioribulose-1-phosphate (MTRu-1-P) into 2,3-diketo-5-methylthiopentyl-1-phosphate (DK-MTP-1-P). The sequence is that of Methylthioribulose-1-phosphate dehydratase from Ajellomyces capsulatus (strain H143) (Darling's disease fungus).